The primary structure comprises 520 residues: RNA polymerase sigma factor sigA (520 aa).

A chloroplast-targeting transit peptide spans 1–66; the sequence is MTATPAVIGL…APATPKLTAV (66 aa). The segment covering 37 to 49 has biased composition (gly residues); it reads GGGGGGGGGGGGD. 3 disordered regions span residues 37 to 57, 87 to 117, and 171 to 190; these read GGGGGGGGGGGGDAMSFAPPA, HHSSAAAALAPPPPPPPPPTPSPASRAAHAH, and SVSARQRRMSGRRRGRTKNG. The span at 96–108 shows a compositional bias: pro residues; the sequence is APPPPPPPPPTPS. The span at 175–187 shows a compositional bias: basic residues; sequence RQRRMSGRRRGRT. The Polymerase core binding signature appears at 305 to 318; it reads DLIQGGLIGLLRGI. Residues 479–498 constitute a DNA-binding region (H-T-H motif); the sequence is WEDISRQFGLSRERVRQVGL.

It belongs to the sigma-70 factor family. Expressed in shoots. Expressed in the tips of fully elongated leaves. Expressed in leaf blades.

It is found in the plastid. The protein localises to the chloroplast. Its function is as follows. Sigma factors are initiation factors that promote the attachment of plastid-encoded RNA polymerase (PEP) to specific initiation sites and are then released. Controls the transcription of the psaA and psaB genes in chloroplast, and thus maintains the abundance of the core protein complex PsaA-PsaB of photosystem I (PSI) in the thylakoid membrane. Maintains PSI activity, sufficient rate of electron transfer from PSII to PSI, and photochemical efficiency. The polypeptide is RNA polymerase sigma factor sigA (Oryza sativa subsp. japonica (Rice)).